We begin with the raw amino-acid sequence, 353 residues long: Serine proteinase inhibitor 1 (353 aa).

It belongs to the serpin family. Poxviruses subfamily.

Its subcellular location is the host cytoplasm. Functionally, plays a role in mediating viral host range. May act to inhibit a caspase independent form of apoptosis to allow efficient virus replication in infected cells. In Vaccinia virus (strain Copenhagen) (VACV), this protein is Serine proteinase inhibitor 1 (OPG208).